We begin with the raw amino-acid sequence, 152 residues long: Protein Smg homolog (152 aa).

It belongs to the Smg family.

This Bordetella bronchiseptica (strain ATCC BAA-588 / NCTC 13252 / RB50) (Alcaligenes bronchisepticus) protein is Protein Smg homolog.